The chain runs to 421 residues: D-amino acid dehydrogenase (421 aa).

4–18 (VLVLGSGVVGLTSAW) contributes to the FAD binding site.

Belongs to the DadA oxidoreductase family. The cofactor is FAD.

It catalyses the reaction a D-alpha-amino acid + A + H2O = a 2-oxocarboxylate + AH2 + NH4(+). Functionally, oxidative deamination of D-amino acids. In Vibrio cholerae serotype O1 (strain ATCC 39315 / El Tor Inaba N16961), this protein is D-amino acid dehydrogenase.